Reading from the N-terminus, the 169-residue chain is Probable inosine/xanthosine triphosphatase (169 aa).

Position 58 (Asp58) interacts with Mg(2+).

Belongs to the YjjX NTPase family. As to quaternary structure, homodimer. Mg(2+) is required as a cofactor. Requires Mn(2+) as cofactor.

It carries out the reaction XTP + H2O = XDP + phosphate + H(+). It catalyses the reaction ITP + H2O = IDP + phosphate + H(+). In terms of biological role, phosphatase that hydrolyzes non-canonical purine nucleotides such as XTP and ITP to their respective diphosphate derivatives. Probably excludes non-canonical purines from DNA/RNA precursor pool, thus preventing their incorporation into DNA/RNA and avoiding chromosomal lesions. This is Probable inosine/xanthosine triphosphatase from Archaeoglobus fulgidus (strain ATCC 49558 / DSM 4304 / JCM 9628 / NBRC 100126 / VC-16).